Reading from the N-terminus, the 701-residue chain is DNA ligase A (701 aa).

The segment at 1 to 23 (MSEKATGEVEAELPEHPDADERR) is disordered. NAD(+)-binding positions include 49 to 53 (DAEFD), 99 to 100 (SL), and glutamate 129. Lysine 131 acts as the N6-AMP-lysine intermediate in catalysis. Positions 152, 192, 308, and 332 each coordinate NAD(+). Residues cysteine 426, cysteine 429, cysteine 445, and cysteine 451 each coordinate Zn(2+). Positions 615-701 (SIERTLEGLS…EQGPPVEPAE (87 aa)) constitute a BRCT domain.

The protein belongs to the NAD-dependent DNA ligase family. LigA subfamily. Mg(2+) serves as cofactor. The cofactor is Mn(2+).

It carries out the reaction NAD(+) + (deoxyribonucleotide)n-3'-hydroxyl + 5'-phospho-(deoxyribonucleotide)m = (deoxyribonucleotide)n+m + AMP + beta-nicotinamide D-nucleotide.. Its function is as follows. DNA ligase that catalyzes the formation of phosphodiester linkages between 5'-phosphoryl and 3'-hydroxyl groups in double-stranded DNA using NAD as a coenzyme and as the energy source for the reaction. It is essential for DNA replication and repair of damaged DNA. Probably the only ligase required for non-homologous end joining (NHEJ) repair of 3-overhangs. This chain is DNA ligase A, found in Mycolicibacterium smegmatis (strain ATCC 700084 / mc(2)155) (Mycobacterium smegmatis).